A 356-amino-acid polypeptide reads, in one-letter code: Palmitoyltransferase swf1 (356 aa).

The Lumenal segment spans residues 1-2; the sequence is MD. Residues 3-23 traverse the membrane as a helical segment; the sequence is FFYKYLALVAIASLMVFILLF. The Cytoplasmic segment spans residues 24–78; the sequence is GQIPKLKYTVIGKLNRFFMVTIPYHLHVLDSRYADGRCSAAMRSLSNYVLYKNNP. A helical transmembrane segment spans residues 79–99; the sequence is LVVFLYLALITIGIASFFIYG. Topologically, residues 100 to 107 are lumenal; the sequence is SSLTQKFS. Residues 108–128 traverse the membrane as a helical segment; that stretch reads IIDWISVLTSVLLPYISLYIA. Topologically, residues 129–201 are cytoplasmic; it reads AKSNPGKIDL…NNCVGLNNAR (73 aa). The 51-residue stretch at 158-208 folds into the DHHC domain; sequence NKCSTCKFEKPARSKHCRLCNICVEKFDHHCIWINNCVGLNNARYFFLFLL. A helical membrane pass occupies residues 202–222; the sequence is YFFLFLLCTIQLLFHSILRLG. At 223–253 the chain is on the lumenal side; it reads YHFNALRDMRQYPSFLRSWWFAIKSEGELGS. The helical transmembrane segment at 254-274 threads the bilayer; that stretch reads VFLISLICSVLVLCLLGYEFF. The Cytoplasmic segment spans residues 275-356; sequence LVYAGYTTNE…FPYRHLYSTT (82 aa).

The protein belongs to the DHHC palmitoyltransferase family. SWF1 subfamily.

It is found in the endoplasmic reticulum membrane. The catalysed reaction is L-cysteinyl-[protein] + hexadecanoyl-CoA = S-hexadecanoyl-L-cysteinyl-[protein] + CoA. Its function is as follows. Palmitoyltransferase that targets several endosomal SNAREs. Palmitoylates the SNAREs at cysteine residues close to the cytoplasmic end of their transmembrane domain. May have a role in the cellular quality control of transmembrane domain-containing proteins. This Schizosaccharomyces pombe (strain 972 / ATCC 24843) (Fission yeast) protein is Palmitoyltransferase swf1 (swf1).